We begin with the raw amino-acid sequence, 314 residues long: Methionyl-tRNA formyltransferase (314 aa).

A (6S)-5,6,7,8-tetrahydrofolate-binding site is contributed by 110–113; the sequence is SLLP.

The protein belongs to the Fmt family.

The catalysed reaction is L-methionyl-tRNA(fMet) + (6R)-10-formyltetrahydrofolate = N-formyl-L-methionyl-tRNA(fMet) + (6S)-5,6,7,8-tetrahydrofolate + H(+). Its function is as follows. Attaches a formyl group to the free amino group of methionyl-tRNA(fMet). The formyl group appears to play a dual role in the initiator identity of N-formylmethionyl-tRNA by promoting its recognition by IF2 and preventing the misappropriation of this tRNA by the elongation apparatus. This is Methionyl-tRNA formyltransferase from Lactobacillus acidophilus (strain ATCC 700396 / NCK56 / N2 / NCFM).